Reading from the N-terminus, the 275-residue chain is 4-hydroxy-3-methylbut-2-enyl diphosphate reductase (275 aa).

A [4Fe-4S] cluster-binding site is contributed by Cys12. Residues His40 and His70 each contribute to the (2E)-4-hydroxy-3-methylbut-2-enyl diphosphate site. His40 and His70 together coordinate dimethylallyl diphosphate. The isopentenyl diphosphate site is built by His40 and His70. Cys92 lines the [4Fe-4S] cluster pocket. (2E)-4-hydroxy-3-methylbut-2-enyl diphosphate is bound at residue His119. Residue His119 coordinates dimethylallyl diphosphate. His119 is a binding site for isopentenyl diphosphate. The active-site Proton donor is Glu121. Thr151 serves as a coordination point for (2E)-4-hydroxy-3-methylbut-2-enyl diphosphate. Cys181 provides a ligand contact to [4Fe-4S] cluster. (2E)-4-hydroxy-3-methylbut-2-enyl diphosphate-binding residues include Ser209, Ser210, Asn211, and Ser251. Residues Ser209, Ser210, Asn211, and Ser251 each contribute to the dimethylallyl diphosphate site. Isopentenyl diphosphate is bound by residues Ser209, Ser210, Asn211, and Ser251.

This sequence belongs to the IspH family. The cofactor is [4Fe-4S] cluster.

The enzyme catalyses isopentenyl diphosphate + 2 oxidized [2Fe-2S]-[ferredoxin] + H2O = (2E)-4-hydroxy-3-methylbut-2-enyl diphosphate + 2 reduced [2Fe-2S]-[ferredoxin] + 2 H(+). It catalyses the reaction dimethylallyl diphosphate + 2 oxidized [2Fe-2S]-[ferredoxin] + H2O = (2E)-4-hydroxy-3-methylbut-2-enyl diphosphate + 2 reduced [2Fe-2S]-[ferredoxin] + 2 H(+). It functions in the pathway isoprenoid biosynthesis; dimethylallyl diphosphate biosynthesis; dimethylallyl diphosphate from (2E)-4-hydroxy-3-methylbutenyl diphosphate: step 1/1. It participates in isoprenoid biosynthesis; isopentenyl diphosphate biosynthesis via DXP pathway; isopentenyl diphosphate from 1-deoxy-D-xylulose 5-phosphate: step 6/6. Catalyzes the conversion of 1-hydroxy-2-methyl-2-(E)-butenyl 4-diphosphate (HMBPP) into a mixture of isopentenyl diphosphate (IPP) and dimethylallyl diphosphate (DMAPP). Acts in the terminal step of the DOXP/MEP pathway for isoprenoid precursor biosynthesis. This chain is 4-hydroxy-3-methylbut-2-enyl diphosphate reductase, found in Thermotoga sp. (strain RQ2).